A 261-amino-acid chain; its full sequence is Taurine import ATP-binding protein TauB (261 aa).

Positions 4–233 (LQLERIGAQY…RYAAGESARA (230 aa)) constitute an ABC transporter domain. ATP is bound at residue 38–45 (GPSGSGKT).

Belongs to the ABC transporter superfamily. Taurine importer (TC 3.A.1.17.1) family. The complex is composed of two ATP-binding proteins (TauB), two transmembrane proteins (TauC) and a solute-binding protein (TauA).

Its subcellular location is the cell inner membrane. The catalysed reaction is taurine(out) + ATP + H2O = taurine(in) + ADP + phosphate + H(+). In terms of biological role, part of the ABC transporter complex TauABC involved in taurine import. Responsible for energy coupling to the transport system. This is Taurine import ATP-binding protein TauB from Pseudomonas savastanoi pv. phaseolicola (strain 1448A / Race 6) (Pseudomonas syringae pv. phaseolicola (strain 1448A / Race 6)).